A 141-amino-acid chain; its full sequence is Keratin-associated protein 19-2 (141 aa).

The tract at residues 5–135 (SGYSGGLGYG…CRRSSCCGGY (131 aa)) is 48 X 2 AA repeats of G-[YCGS].

This sequence belongs to the KRTAP type 19 family. In terms of assembly, interacts with hair keratins. In terms of tissue distribution, strong expression in narrowly defined pattern restricted to the lower and middle cortical regions of the hair shaft in both developing and cycling hair. During hair follicle regression (catagen), expression levels decrease until expression is no longer detectable in follicles at resting stage (telogen).

In the hair cortex, hair keratin intermediate filaments are embedded in an interfilamentous matrix, consisting of hair keratin-associated proteins (KRTAP), which are essential for the formation of a rigid and resistant hair shaft through their extensive disulfide bond cross-linking with abundant cysteine residues of hair keratins. The matrix proteins include the high-sulfur and high-glycine-tyrosine keratins. This Mus musculus (Mouse) protein is Keratin-associated protein 19-2 (Krtap19-2).